Consider the following 207-residue polypeptide: NAD(P)H-quinone oxidoreductase subunit K, chloroplastic (207 aa).

[4Fe-4S] cluster is bound by residues cysteine 47, cysteine 48, cysteine 112, and cysteine 143.

Belongs to the complex I 20 kDa subunit family. NDH is composed of at least 16 different subunits, 5 of which are encoded in the nucleus. Requires [4Fe-4S] cluster as cofactor.

It localises to the plastid. The protein localises to the chloroplast thylakoid membrane. It catalyses the reaction a plastoquinone + NADH + (n+1) H(+)(in) = a plastoquinol + NAD(+) + n H(+)(out). It carries out the reaction a plastoquinone + NADPH + (n+1) H(+)(in) = a plastoquinol + NADP(+) + n H(+)(out). Functionally, NDH shuttles electrons from NAD(P)H:plastoquinone, via FMN and iron-sulfur (Fe-S) centers, to quinones in the photosynthetic chain and possibly in a chloroplast respiratory chain. The immediate electron acceptor for the enzyme in this species is believed to be plastoquinone. Couples the redox reaction to proton translocation, and thus conserves the redox energy in a proton gradient. The chain is NAD(P)H-quinone oxidoreductase subunit K, chloroplastic from Psilotum nudum (Whisk fern).